A 463-amino-acid chain; its full sequence is Fumarate hydratase class II (463 aa).

Substrate contacts are provided by residues 97–99 (SGT), 128–131 (HPND), 138–140 (SSN), and Thr-186. Residue His-187 is the Proton donor/acceptor of the active site. Ser-317 is an active-site residue. Substrate is bound by residues Ser-318 and 323 to 325 (KVN).

The protein belongs to the class-II fumarase/aspartase family. Fumarase subfamily. In terms of assembly, homotetramer.

The protein localises to the cytoplasm. It catalyses the reaction (S)-malate = fumarate + H2O. It participates in carbohydrate metabolism; tricarboxylic acid cycle; (S)-malate from fumarate: step 1/1. Its function is as follows. Involved in the TCA cycle. Catalyzes the stereospecific interconversion of fumarate to L-malate. This is Fumarate hydratase class II from Helicobacter pylori (strain J99 / ATCC 700824) (Campylobacter pylori J99).